The chain runs to 251 residues: MVDQEKETTHFGFRTVAKEQKEGMVAEVFHSVAAKYDLMNDLMSFGVHRIWKRFTVDCSGVRRGQRVLDLAGGTGDLTAKFSRLVGEQGEVILADINESMLRMGREKLRDKGIVGNVSYVQANAEALPFPDNYFDCITISFGLRNVTEKEKALRSMFRVLKPGGRLLVLEFSKPLLEPLSKAYDAYSFHILPKIGELVAQDAESYRYLAESIRMHPDQETLKGMMADAGFENVTYSNLTGGIVALHRGFKF.

S-adenosyl-L-methionine contacts are provided by residues Thr74, Asp95, 123 to 124, and Ser140; that span reads NA.

The protein belongs to the class I-like SAM-binding methyltransferase superfamily. MenG/UbiE family.

The catalysed reaction is a 2-demethylmenaquinol + S-adenosyl-L-methionine = a menaquinol + S-adenosyl-L-homocysteine + H(+). It carries out the reaction a 2-methoxy-6-(all-trans-polyprenyl)benzene-1,4-diol + S-adenosyl-L-methionine = a 5-methoxy-2-methyl-3-(all-trans-polyprenyl)benzene-1,4-diol + S-adenosyl-L-homocysteine + H(+). Its pathway is quinol/quinone metabolism; menaquinone biosynthesis; menaquinol from 1,4-dihydroxy-2-naphthoate: step 2/2. The protein operates within cofactor biosynthesis; ubiquinone biosynthesis. Methyltransferase required for the conversion of demethylmenaquinol (DMKH2) to menaquinol (MKH2) and the conversion of 2-polyprenyl-6-methoxy-1,4-benzoquinol (DDMQH2) to 2-polyprenyl-3-methyl-6-methoxy-1,4-benzoquinol (DMQH2). The polypeptide is Ubiquinone/menaquinone biosynthesis C-methyltransferase UbiE (Yersinia pestis bv. Antiqua (strain Angola)).